The chain runs to 105 residues: UPF0145 protein OEOE_0637 (105 aa).

It belongs to the UPF0145 family.

This is UPF0145 protein OEOE_0637 from Oenococcus oeni (strain ATCC BAA-331 / PSU-1).